The following is a 452-amino-acid chain: MEKQYLTVTALTRYIKTKIEYDPHLQSVWLKGEISNFKNHSRGHMYFTLKDENARIAAVMFAGHNRNIKFRPENGMKVLVKGKISVYEASGSYQIYIQDMQPDGVGNLHLAYEQLKVRLEEEGLFSQVYKKTIPPYAKTIGVITSPTGAAIRDIITTIKRRYPIGNVIVFPVLVQGESAAPSIVQAIRTANEMEGIDVLIVGRGGGSIEELWAFNEEMVARAIFKSEIPIISAVGHETDFTIADFVADLRAPTPTAAAELAAPNIIELQEKVLQRTLRLQRAMRELVHKKEEKLQVLQKSYAFRYPRQVYEQKEEQLDRALEQLVLAKERYIDKKVNQLKQLSFYLEKHHPSQKIMQTKVAVETLQKQLQREMQTLLQTKEFAFVRAAQKLEALSPLKVMMRGYGLVYDEEKQVLKSVKDVSLGDAVSVQLQDGILDCSVSGIEERELNNGK.

The protein belongs to the XseA family. Heterooligomer composed of large and small subunits.

The protein localises to the cytoplasm. It carries out the reaction Exonucleolytic cleavage in either 5'- to 3'- or 3'- to 5'-direction to yield nucleoside 5'-phosphates.. In terms of biological role, bidirectionally degrades single-stranded DNA into large acid-insoluble oligonucleotides, which are then degraded further into small acid-soluble oligonucleotides. The chain is Exodeoxyribonuclease 7 large subunit from Bacillus cereus (strain ATCC 10987 / NRS 248).